The primary structure comprises 319 residues: Serine/threonine-protein phosphatase PP1 isozyme 2 (319 aa).

Asp-61, His-63, Asp-89, and Asn-121 together coordinate Mn(2+). Residue His-122 is the Proton donor of the active site. Mn(2+) is bound by residues His-170 and His-245.

This sequence belongs to the PPP phosphatase family. PP-1 subfamily. The cofactor is Mn(2+).

It catalyses the reaction O-phospho-L-seryl-[protein] + H2O = L-seryl-[protein] + phosphate. The enzyme catalyses O-phospho-L-threonyl-[protein] + H2O = L-threonyl-[protein] + phosphate. The sequence is that of Serine/threonine-protein phosphatase PP1 isozyme 2 from Acetabularia peniculus (Green alga).